Reading from the N-terminus, the 283-residue chain is Pantothenate synthetase (283 aa).

Position 30 to 37 (30 to 37 (MGNLHDGH)) interacts with ATP. Histidine 37 acts as the Proton donor in catalysis. Residue glutamine 61 participates in (R)-pantoate binding. Glutamine 61 is a binding site for beta-alanine. Residue 149-152 (GEKD) coordinates ATP. Glutamine 155 lines the (R)-pantoate pocket. 186–189 (LSSR) lines the ATP pocket.

It belongs to the pantothenate synthetase family. In terms of assembly, homodimer.

It localises to the cytoplasm. It catalyses the reaction (R)-pantoate + beta-alanine + ATP = (R)-pantothenate + AMP + diphosphate + H(+). It participates in cofactor biosynthesis; (R)-pantothenate biosynthesis; (R)-pantothenate from (R)-pantoate and beta-alanine: step 1/1. Catalyzes the condensation of pantoate with beta-alanine in an ATP-dependent reaction via a pantoyl-adenylate intermediate. The protein is Pantothenate synthetase of Escherichia coli O157:H7.